Here is a 465-residue protein sequence, read N- to C-terminus: Iron transporter FTH1 (465 aa).

Residues 1–11 (MAFEDYFSFQI) lie on the Vacuolar side of the membrane. A helical transmembrane segment spans residues 12-32 (FFIFLRESLEIVVIVSILLTI). Residues 33–135 (VKQGLSVEDD…LYQKLKIQIL (103 aa)) lie on the Cytoplasmic side of the membrane. The interval 44-66 (PFEGSSSSAGLPSPNTNTNADST) is disordered. Polar residues predominate over residues 46 to 66 (EGSSSSAGLPSPNTNTNADST). Residues 136 to 156 (AGGAFGLLLCMLIGGAFVSIF) form a helical membrane-spanning segment. Residues 157–170 (YHIGTDLWTLSEHY) are Vacuolar-facing. The chain crosses the membrane as a helical span at residues 171–191 (YEGVLSLVASVIISVMGLFFL). Topologically, residues 192-289 (RMGKLREKFR…FFFRYSSSLS (98 aa)) are cytoplasmic. A helical membrane pass occupies residues 290–310 (LKICLVVATCFLYLIAAGLFS). The Vacuolar portion of the chain corresponds to 311–358 (KGVWQLELQDYVNKCNGQDMSEVGNGPGSYDISRSVWHVNCCNGEKDG). Residues 359–379 (GWMIFTAIFGWTNSATVGSVI) form a helical membrane-spanning segment. Residues 380 to 465 (SYNAYWLVLI…LIIDSSGSAN (86 aa)) lie on the Cytoplasmic side of the membrane. Residues 433-465 (TSELNSSTSEPDSQRRSKDSSVPLIIDSSGSAN) are disordered. Ser449 and Ser453 each carry phosphoserine.

This sequence belongs to the oxidase-dependent Fe transporter (OFeT) (TC 9.A.10.1) family. Interacts with FET5.

It is found in the vacuole membrane. Functionally, high affinity iron transporter probably involved in transport of intravacuolar stores of iron. The polypeptide is Iron transporter FTH1 (FTH1) (Saccharomyces cerevisiae (strain ATCC 204508 / S288c) (Baker's yeast)).